A 160-amino-acid polypeptide reads, in one-letter code: MAEKTYPMTLEEKEKLEKELEELKLVRRPEVVERIKIARSYGDLSENSEYEAAKDEQAFVEGQISSLETKIRYAEIVNSDAVAQDEVAIGKTVTIQEIGEDEEEVYIIVGSAGADAFAGKVSNESPIGQALIGKKTGDTATIETPVGSYDVKILKVEKTA.

The stretch at 1-72 (MAEKTYPMTL…QISSLETKIR (72 aa)) forms a coiled coil.

It belongs to the GreA/GreB family.

Necessary for efficient RNA polymerase transcription elongation past template-encoded arresting sites. The arresting sites in DNA have the property of trapping a certain fraction of elongating RNA polymerases that pass through, resulting in locked ternary complexes. Cleavage of the nascent transcript by cleavage factors such as GreA or GreB allows the resumption of elongation from the new 3'terminus. GreA releases sequences of 2 to 3 nucleotides. The protein is Transcription elongation factor GreA of Streptococcus pneumoniae (strain ATCC 700669 / Spain 23F-1).